A 264-amino-acid chain; its full sequence is Thymidylate synthase (264 aa).

Position 21 (R21) interacts with dUMP. H51 is a binding site for (6R)-5,10-methylene-5,6,7,8-tetrahydrofolate. 126 to 127 is a binding site for dUMP; it reads RR. Catalysis depends on C146, which acts as the Nucleophile. DUMP is bound by residues 166–169, N177, and 207–209; these read RSAD and HLY. (6R)-5,10-methylene-5,6,7,8-tetrahydrofolate is bound at residue D169. A263 lines the (6R)-5,10-methylene-5,6,7,8-tetrahydrofolate pocket.

Belongs to the thymidylate synthase family. Bacterial-type ThyA subfamily. As to quaternary structure, homodimer.

It is found in the cytoplasm. The catalysed reaction is dUMP + (6R)-5,10-methylene-5,6,7,8-tetrahydrofolate = 7,8-dihydrofolate + dTMP. It functions in the pathway pyrimidine metabolism; dTTP biosynthesis. In terms of biological role, catalyzes the reductive methylation of 2'-deoxyuridine-5'-monophosphate (dUMP) to 2'-deoxythymidine-5'-monophosphate (dTMP) while utilizing 5,10-methylenetetrahydrofolate (mTHF) as the methyl donor and reductant in the reaction, yielding dihydrofolate (DHF) as a by-product. This enzymatic reaction provides an intracellular de novo source of dTMP, an essential precursor for DNA biosynthesis. This chain is Thymidylate synthase, found in Legionella pneumophila subsp. pneumophila (strain Philadelphia 1 / ATCC 33152 / DSM 7513).